The sequence spans 284 residues: tRNA-splicing endonuclease (284 aa).

Catalysis depends on residues tyrosine 222, histidine 229, and lysine 257.

Belongs to the tRNA-intron endonuclease family. Archaeal long subfamily. Homodimer.

The catalysed reaction is pretRNA = a 3'-half-tRNA molecule with a 5'-OH end + a 5'-half-tRNA molecule with a 2',3'-cyclic phosphate end + an intron with a 2',3'-cyclic phosphate and a 5'-hydroxyl terminus.. Endonuclease that removes tRNA introns. Cleaves pre-tRNA at the 5'- and 3'-splice sites to release the intron. The products are an intron and two tRNA half-molecules bearing 2',3' cyclic phosphate and 5'-OH termini. Recognizes a pseudosymmetric substrate in which 2 bulged loops of 3 bases are separated by a stem of 4 bp. In Picrophilus torridus (strain ATCC 700027 / DSM 9790 / JCM 10055 / NBRC 100828 / KAW 2/3), this protein is tRNA-splicing endonuclease.